The primary structure comprises 357 residues: Alanine racemase (357 aa).

Lys35 acts as the Proton acceptor; specific for D-alanine in catalysis. Lys35 bears the N6-(pyridoxal phosphate)lysine mark. Residue Arg131 coordinates substrate. Residue Tyr256 is the Proton acceptor; specific for L-alanine of the active site. Substrate is bound at residue Met304.

The protein belongs to the alanine racemase family. Pyridoxal 5'-phosphate is required as a cofactor.

The enzyme catalyses L-alanine = D-alanine. The protein operates within amino-acid biosynthesis; D-alanine biosynthesis; D-alanine from L-alanine: step 1/1. Functionally, catalyzes the interconversion of L-alanine and D-alanine. May also act on other amino acids. The protein is Alanine racemase (alr) of Legionella pneumophila (strain Lens).